The primary structure comprises 188 residues: uncharacterized protein (188 aa).

Ser-14 carries the post-translational modification Phosphoserine. Residues 165–188 form a disordered region; the sequence is RQAMAAKRNRFRKNVRKLPNKKKH. The segment covering 171 to 188 has biased composition (basic residues); it reads KRNRFRKNVRKLPNKKKH.

The protein resides in the nucleus. It is found in the nucleolus. This is an uncharacterized protein from Schizosaccharomyces pombe (strain 972 / ATCC 24843) (Fission yeast).